The primary structure comprises 110 residues: Large ribosomal subunit protein uL22 (110 aa).

This sequence belongs to the universal ribosomal protein uL22 family. In terms of assembly, part of the 50S ribosomal subunit.

In terms of biological role, this protein binds specifically to 23S rRNA; its binding is stimulated by other ribosomal proteins, e.g. L4, L17, and L20. It is important during the early stages of 50S assembly. It makes multiple contacts with different domains of the 23S rRNA in the assembled 50S subunit and ribosome. The globular domain of the protein is located near the polypeptide exit tunnel on the outside of the subunit, while an extended beta-hairpin is found that lines the wall of the exit tunnel in the center of the 70S ribosome. In Pseudoalteromonas translucida (strain TAC 125), this protein is Large ribosomal subunit protein uL22.